The following is a 1184-amino-acid chain: MAAIKTWVFSFLVLEVTTVLGRQTMLAQSVRRVQPVKRTPKTLAKPADSQESPGEWTTWFNIDHPGGQGDYERLDAIRFYYGERVCARPLRLEARTTDWMPAGSTGQVVHGSPREGFWCLNREQRPGQNCSNYTVRFLCPPGSLRGDAEHIWSSWSPWSKCSAACGHTGVQTRTRTCLAQTVSLCSEATEEGQLCMSQACTACDLTCPMGQVNADCDACMCQDFMLHGAISLPGGGPAPGAAVYLLAKAPKMLTRTDSSGRFRVPGLCPDGKTILKITKTKFAPIMITMPKTSLKSATINAEFVRAETPYIVMNPEMKARRAGQSVSLCCKATGKPSPDKYFWYHNNTLLDPSLYKHESKLVLRNLQQDQAGEYFCKAQSDAGAVKSKVTQLTVIAHDETPCNPTPESYLIRLPHDCFQNASNSFYYDVGRCPIKTCAGQQDNGIRCRDAVENCCGISRTEEREIQCSGYTLPTKVAVECSCQRCAETRSIVRGRVTATDNGEPMRFGHVYMGNNRVSMTGYKGTFTLHIPQDTERLVLTFVDRLQKFVNTTKVLPFNKKGSAVFHEIKMLRQKEPITLEAMETNIIPLGEVIGEDPVAELEIPSKSFYRQNGEPFTGKVKASVTFLDPRNISTATAAQSDLNFINDEGDTFPLRTYGMFSVDFRDEATSESLNAGKVKVHLDSTQVKMPEHVPAMKLWSLNPDTGLWEEEGDFKFESQRRNKREERTFLVGNMEIRERRLFNLDVPESRRCFIKVRTYRSERFLPSEQIQGVVVSVINLEPRTGFSSNPRAWGRFDSVITGPNGACLPAFCDDQSPDAYSVYVLASLSGEELEAVESSPKFNPNAIGVPQPYLNKLKYRRTDHEDPRVKKTAFQISMAKPRPNSAEESNGPIYAFENLRACEEAPPSAAHFRFYQIEGDRYDYNTVPFNEDDPMSWTEDYLAWWPKPMEFRACYIKVKIVGPLEVNVRSRNMGGTHRQTVGKLYGIRDVKSTRDRDQPNVSSACLEFKCSGMLYDQDRVDRTLVKVIPQGSCHRASVNSMLHEYLVNHLPLAVNNDTSEYTMLAPLDPLGHNYGIYTVTDQDPRTAKEIALGRCFDGTSDGSSRIMKSNVGVALTFNCAERQVGRQSAFQYLQSTPARSPATGTVQGRVPAMRQQRASRGGLRRRGSMAPLRFSGVAQQPLSN.

Positions 1–21 (MAAIKTWVFSFLVLEVTTVLG) are cleaved as a signal peptide. 2 N-linked (GlcNAc...) asparagine glycosylation sites follow: N129 and N132. The TSP type-1 domain occupies 150-201 (HIWSSWSPWSKCSAACGHTGVQTRTRTCLAQTVSLCSEATEEGQLCMSQACT). 4 cysteine pairs are disulfide-bonded: C161/C195, C165/C200, C177/C185, and C330/C376. The 85-residue stretch at 309-393 (PYIVMNPEMK…AVKSKVTQLT (85 aa)) folds into the Ig-like C2-type domain. 6 N-linked (GlcNAc...) asparagine glycosylation sites follow: N346, N420, N550, N631, N1000, and N1056. The disordered stretch occupies residues 1138 to 1184 (ARSPATGTVQGRVPAMRQQRASRGGLRRRGSMAPLRFSGVAQQPLSN).

Monomer. Interacts with TGFB1. Post-translationally, cleaved into 2 chains possibly by a furin-like protease upon or preceding secretion. Expressed in articular and meniscal cartilage (at protein level). Primarily localizes to the superficial and intermediate zones of articular cartilage (at protein level).

The protein resides in the secreted. It localises to the extracellular space. It is found in the extracellular matrix. Its function is as follows. Probably plays a role in cartilage scaffolding. May act by antagonizing TGF-beta1 (TGFB1) and IGF1 functions. Has the ability to suppress IGF1-induced proliferation and sulfated proteoglycan synthesis, and inhibits ligand-induced IGF1R autophosphorylation. May inhibit TGFB1-mediated induction of cartilage matrix genes via its interaction with TGFB1. Overexpression may lead to impair chondrocyte growth and matrix repair and indirectly promote inorganic pyrophosphate (PPi) supersaturation in aging and osteoarthritis cartilage. The sequence is that of Cartilage intermediate layer protein 1 (Cilp) from Mus musculus (Mouse).